A 348-amino-acid chain; its full sequence is uncharacterized protein (348 aa).

Residues Ser132 to Leu348 form a disordered region. Positions Ser161–Arg178 are enriched in low complexity. Residues Ser192–Pro207 are compositionally biased toward polar residues. Low complexity predominate over residues Ala227 to Pro273. Residues Ala274–Arg287 are compositionally biased toward pro residues. Residues Thr288–Arg310 are compositionally biased toward low complexity.

This is an uncharacterized protein from Streptomyces fradiae (Streptomyces roseoflavus).